Reading from the N-terminus, the 417-residue chain is Gamma-glutamyl phosphate reductase (417 aa).

Belongs to the gamma-glutamyl phosphate reductase family.

The protein resides in the cytoplasm. It catalyses the reaction L-glutamate 5-semialdehyde + phosphate + NADP(+) = L-glutamyl 5-phosphate + NADPH + H(+). It functions in the pathway amino-acid biosynthesis; L-proline biosynthesis; L-glutamate 5-semialdehyde from L-glutamate: step 2/2. Its function is as follows. Catalyzes the NADPH-dependent reduction of L-glutamate 5-phosphate into L-glutamate 5-semialdehyde and phosphate. The product spontaneously undergoes cyclization to form 1-pyrroline-5-carboxylate. The polypeptide is Gamma-glutamyl phosphate reductase (Klebsiella pneumoniae (strain 342)).